We begin with the raw amino-acid sequence, 529 residues long: Keratin, type II cytoskeletal 74 (529 aa).

The segment at 1-139 is head; the sequence is MSRQLNIKSS…DPEIQKVRAQ (139 aa). Residues 140–175 form a coil 1A region; the sequence is EREQIKVLNDKFASFIDKVRFLEQQNQVLETKWELL. One can recognise an IF rod domain in the interval 140 to 453; that stretch reads EREQIKVLND…KLLEGEECRM (314 aa). The linker 1 stretch occupies residues 176–194; sequence QQLDLNNCKKNLEPILEGY. Residues 195–286 form a coil 1B region; it reads ISNLRKQLET…CLYDAEIAQI (92 aa). Residues 287–310 are linker 12; that stretch reads QTHASETSVILSMDNNRDLDLDSI. Residues 311–449 form a coil 2 region; the sequence is IAEVRMHYEE…ATYRKLLEGE (139 aa). Residues 450 to 529 form a tail region; that stretch reads ECRMSGENPS…ASIPARKATR (80 aa). The segment covering 484 to 500 has biased composition (low complexity); it reads GASAVAGSSGSTQSGQT. The disordered stretch occupies residues 484–529; that stretch reads GASAVAGSSGSTQSGQTKTTEARGGDLKDTQGKSTPASIPARKATR. Positions 503–514 are enriched in basic and acidic residues; it reads TEARGGDLKDTQ. A Phosphothreonine modification is found at Thr513.

Belongs to the intermediate filament family. In terms of assembly, heterotetramer of two type I and two type II keratins. In terms of tissue distribution, highly expressed in hair follicles from scalp. In hair, it is specifically present in the inner root sheath (IRS) of the hair follicle. Present in the IRS Huxley layer, but not in Henle layer or cuticle of the IRS. In the IRS Huxley layer, it is expressed in specialized Huxley cells, termed 'Fluegelzellen, along the area of differentiated Henle cells (at protein level).

Has a role in hair formation. Specific component of keratin intermediate filaments in the inner root sheath (IRS) of the hair follicle. In Homo sapiens (Human), this protein is Keratin, type II cytoskeletal 74 (KRT74).